A 462-amino-acid chain; its full sequence is Asparagine--tRNA ligase (462 aa).

Belongs to the class-II aminoacyl-tRNA synthetase family. As to quaternary structure, homodimer.

It is found in the cytoplasm. The catalysed reaction is tRNA(Asn) + L-asparagine + ATP = L-asparaginyl-tRNA(Asn) + AMP + diphosphate + H(+). This Thermosynechococcus vestitus (strain NIES-2133 / IAM M-273 / BP-1) protein is Asparagine--tRNA ligase.